We begin with the raw amino-acid sequence, 307 residues long: Putative oxidoreductase YceM (307 aa).

The protein belongs to the Gfo/Idh/MocA family.

This is Putative oxidoreductase YceM (yceM) from Salmonella typhimurium (strain LT2 / SGSC1412 / ATCC 700720).